A 468-amino-acid polypeptide reads, in one-letter code: Putative chitinase 1 (468 aa).

An N-terminal signal peptide occupies residues 1–21 (MDFYSSLLPFLILIYLEFCSG). The GH18 domain maps to 22-381 (FNRVCYYNGW…MSIIHGLGEY (360 aa)). Cys-26 and Cys-51 form a disulfide bridge. Chitin is bound by residues 73–74 (VF) and 100–103 (GGWD). Glu-143 acts as the Proton donor in catalysis. Chitin contacts are provided by residues Tyr-144, 213–216 (KMYD), and Trp-353. A coiled-coil region spans residues 386 to 440 (SDTLEAEREMINKKIRKAAREISYYSDKGNSTMAKKMEDKLNQLKDHLSAVQAHQ).

Belongs to the glycosyl hydrolase 18 family. Prismatic layer of shell (at protein level). Expressed primarily in the mantle with highest level in the outer epithelium of the mantle edge and lower level in the mantle pallium.

The protein localises to the secreted. It carries out the reaction Random endo-hydrolysis of N-acetyl-beta-D-glucosaminide (1-&gt;4)-beta-linkages in chitin and chitodextrins.. This Margaritifera margaritifera (Freshwater pearl mussel) protein is Putative chitinase 1.